A 603-amino-acid polypeptide reads, in one-letter code: DNA mismatch repair protein MutL (603 aa).

Over residues 336–346 (EVSKKQKEQQK) the composition is skewed to basic and acidic residues. Disordered regions lie at residues 336–355 (EVSK…MSFE) and 361–384 (KETP…DTSR).

This sequence belongs to the DNA mismatch repair MutL/HexB family.

This protein is involved in the repair of mismatches in DNA. It is required for dam-dependent methyl-directed DNA mismatch repair. May act as a 'molecular matchmaker', a protein that promotes the formation of a stable complex between two or more DNA-binding proteins in an ATP-dependent manner without itself being part of a final effector complex. In Listeria welshimeri serovar 6b (strain ATCC 35897 / DSM 20650 / CCUG 15529 / CIP 8149 / NCTC 11857 / SLCC 5334 / V8), this protein is DNA mismatch repair protein MutL.